We begin with the raw amino-acid sequence, 139 residues long: ATP synthase epsilon chain (139 aa).

This sequence belongs to the ATPase epsilon chain family. In terms of assembly, F-type ATPases have 2 components, CF(1) - the catalytic core - and CF(0) - the membrane proton channel. CF(1) has five subunits: alpha(3), beta(3), gamma(1), delta(1), epsilon(1). CF(0) has three main subunits: a, b and c.

Its subcellular location is the cell inner membrane. In terms of biological role, produces ATP from ADP in the presence of a proton gradient across the membrane. The protein is ATP synthase epsilon chain of Serratia proteamaculans (strain 568).